A 479-amino-acid polypeptide reads, in one-letter code: Aspartyl/glutamyl-tRNA(Asn/Gln) amidotransferase subunit B (479 aa).

The protein belongs to the GatB/GatE family. GatB subfamily. Heterotrimer of A, B and C subunits.

It carries out the reaction L-glutamyl-tRNA(Gln) + L-glutamine + ATP + H2O = L-glutaminyl-tRNA(Gln) + L-glutamate + ADP + phosphate + H(+). It catalyses the reaction L-aspartyl-tRNA(Asn) + L-glutamine + ATP + H2O = L-asparaginyl-tRNA(Asn) + L-glutamate + ADP + phosphate + 2 H(+). In terms of biological role, allows the formation of correctly charged Asn-tRNA(Asn) or Gln-tRNA(Gln) through the transamidation of misacylated Asp-tRNA(Asn) or Glu-tRNA(Gln) in organisms which lack either or both of asparaginyl-tRNA or glutaminyl-tRNA synthetases. The reaction takes place in the presence of glutamine and ATP through an activated phospho-Asp-tRNA(Asn) or phospho-Glu-tRNA(Gln). The polypeptide is Aspartyl/glutamyl-tRNA(Asn/Gln) amidotransferase subunit B (Streptococcus equi subsp. zooepidemicus (strain MGCS10565)).